Here is a 187-residue protein sequence, read N- to C-terminus: UPF0301 protein HSM_1900 (187 aa).

This sequence belongs to the UPF0301 (AlgH) family.

This chain is UPF0301 protein HSM_1900, found in Histophilus somni (strain 2336) (Haemophilus somnus).